A 461-amino-acid chain; its full sequence is Phosphomethylpyrimidine synthase (461 aa).

Substrate-binding positions include asparagine 80, methionine 109, tyrosine 139, histidine 174, 194–196 (SRG), 235–238 (DSLR), and glutamate 274. Histidine 278 serves as a coordination point for Zn(2+). A substrate-binding site is contributed by tyrosine 301. Residue histidine 342 participates in Zn(2+) binding. Residues cysteine 422, cysteine 425, and cysteine 430 each coordinate [4Fe-4S] cluster.

The protein belongs to the ThiC family. In terms of assembly, homodimer. The cofactor is [4Fe-4S] cluster.

It carries out the reaction 5-amino-1-(5-phospho-beta-D-ribosyl)imidazole + S-adenosyl-L-methionine = 4-amino-2-methyl-5-(phosphooxymethyl)pyrimidine + CO + 5'-deoxyadenosine + formate + L-methionine + 3 H(+). Its pathway is cofactor biosynthesis; thiamine diphosphate biosynthesis. Its function is as follows. Catalyzes the synthesis of the hydroxymethylpyrimidine phosphate (HMP-P) moiety of thiamine from aminoimidazole ribotide (AIR) in a radical S-adenosyl-L-methionine (SAM)-dependent reaction. The protein is Phosphomethylpyrimidine synthase of Nautilia profundicola (strain ATCC BAA-1463 / DSM 18972 / AmH).